We begin with the raw amino-acid sequence, 205 residues long: MNEQLVNRTMAFAGILQAIAQVQHLARHGELDNAELAASLNTILVTNPDNTADVYQDKIVLQKGYKLILNQLGDSSQKDVEITRYLVGVLALERKLVRSNSGLGMLAERINQVNRQLHHFAITDEQVIANLASIYSDIISNLGPKIQISGNPVCLQRPIVQQKIRALLLAAMRSAVLWRQLGGKRRHLVFARKAIVDTAKKSLTL.

It belongs to the HflD family.

The protein localises to the cytoplasm. It is found in the cell inner membrane. The chain is High frequency lysogenization protein HflD homolog from Shewanella baltica (strain OS185).